The following is a 66-amino-acid chain: Large ribosomal subunit protein eL24 (66 aa).

Residues cysteine 6, cysteine 9, cysteine 32, and cysteine 36 each coordinate Zn(2+). The C4-type zinc-finger motif lies at 6 to 36 (CSFCGKSIEPASGFLYVRKDGSVLNFCSRKC).

It belongs to the eukaryotic ribosomal protein eL24 family. Part of the 50S ribosomal subunit. Forms a cluster with proteins L3 and L14. Zn(2+) serves as cofactor.

Binds to the 23S rRNA. This is Large ribosomal subunit protein eL24 from Picrophilus torridus (strain ATCC 700027 / DSM 9790 / JCM 10055 / NBRC 100828 / KAW 2/3).